Here is a 208-residue protein sequence, read N- to C-terminus: Protein GrpE (208 aa).

Residues 1–27 show a composition bias toward basic and acidic residues; the sequence is MERMNQSRKVPIHDAAEESSAEAHETQ. Positions 1–65 are disordered; sequence MERMNQSRKV…AEEAQEEEAA (65 aa). Residues 45–64 show a composition bias toward acidic residues; the sequence is MAEEAVEQAQDAEEAQEEEA.

It belongs to the GrpE family. Homodimer.

Its subcellular location is the cytoplasm. Its function is as follows. Participates actively in the response to hyperosmotic and heat shock by preventing the aggregation of stress-denatured proteins, in association with DnaK and GrpE. It is the nucleotide exchange factor for DnaK and may function as a thermosensor. Unfolded proteins bind initially to DnaJ; upon interaction with the DnaJ-bound protein, DnaK hydrolyzes its bound ATP, resulting in the formation of a stable complex. GrpE releases ADP from DnaK; ATP binding to DnaK triggers the release of the substrate protein, thus completing the reaction cycle. Several rounds of ATP-dependent interactions between DnaJ, DnaK and GrpE are required for fully efficient folding. This Desulfatibacillum aliphaticivorans protein is Protein GrpE.